The chain runs to 342 residues: Nucleoid-associated protein SO_2177 (342 aa).

Belongs to the YejK family.

Its subcellular location is the cytoplasm. The protein resides in the nucleoid. This is Nucleoid-associated protein SO_2177 from Shewanella oneidensis (strain ATCC 700550 / JCM 31522 / CIP 106686 / LMG 19005 / NCIMB 14063 / MR-1).